The sequence spans 372 residues: Glycerophosphodiester phosphodiesterase GDPD6 (372 aa).

Residues 1-21 (MAFKYLLPLLLLSLLVANCAS) form the signal peptide. The interval 32–58 (KHATKKPLQTSRPYNLAHRGSNGELPE) is disordered. One can recognise a GP-PDE domain in the interval 44-362 (PYNLAHRGSN…DFTGSLHNYQ (319 aa)). N-linked (GlcNAc...) asparagine glycosylation is found at N120, N239, and N260.

This sequence belongs to the glycerophosphoryl diester phosphodiesterase family. In terms of tissue distribution, expressed in flowers and siliques.

It catalyses the reaction a sn-glycero-3-phosphodiester + H2O = an alcohol + sn-glycerol 3-phosphate + H(+). The chain is Glycerophosphodiester phosphodiesterase GDPD6 from Arabidopsis thaliana (Mouse-ear cress).